The sequence spans 92 residues: uncharacterized protein (92 aa).

The segment at alanine 25–glycine 53 is disordered.

This is an uncharacterized protein from Treponema pallidum (strain Nichols).